The primary structure comprises 242 residues: Myogenic factor 6 (242 aa).

The tract at residues 31–63 (SPLYPGSDGTLSPCQDQMPPEAGSDSSGEEHVL) is disordered. The bHLH domain occupies 93 to 144 (DRRKAATLRERRRLKKINEAFEALKRRTVANPNQRLPKVEILRSAISYIERL).

Efficient DNA binding requires dimerization with another bHLH protein. Interacts with CSRP3. As to expression, skeletal muscle.

The protein resides in the nucleus. Involved in muscle differentiation (myogenic factor). Induces fibroblasts to differentiate into myoblasts. Probable sequence specific DNA-binding protein. In Homo sapiens (Human), this protein is Myogenic factor 6 (MYF6).